The sequence spans 237 residues: tRNA1(Val) (adenine(37)-N6)-methyltransferase (237 aa).

This sequence belongs to the methyltransferase superfamily. tRNA (adenine-N(6)-)-methyltransferase family.

It localises to the cytoplasm. The enzyme catalyses adenosine(37) in tRNA1(Val) + S-adenosyl-L-methionine = N(6)-methyladenosine(37) in tRNA1(Val) + S-adenosyl-L-homocysteine + H(+). Its function is as follows. Specifically methylates the adenine in position 37 of tRNA(1)(Val) (anticodon cmo5UAC). In Bacteroides thetaiotaomicron (strain ATCC 29148 / DSM 2079 / JCM 5827 / CCUG 10774 / NCTC 10582 / VPI-5482 / E50), this protein is tRNA1(Val) (adenine(37)-N6)-methyltransferase.